The chain runs to 515 residues: MEELQGYLEEYRSRQQQFLYPLLFQEYIYVFAYDHGLNSSIFYEPQNSLGYDNKFSSVLVKRLIIRMYQKNYWIYSVNDIYQNIFVGHNNYFYFHFFSQILSEGFAVIVEIPFSLQLISSLEEKEIPKSHNLQSSHSIFPFLEDKLLHLNYLSDILIPYPAHMEILVQMLQSWIQDALSLHLLQFLLHEYYNWNSLIIPNKSIYVFSKDNKRLFCFLYNLYIYEYEFLLVFPCKQSSFLRLISSGVLLERIHFYVKIEHLGVCRIFCQKTLWIFKDPFIHYIRYQGKSILGSRGTHFLMKKWKYHLVHFWQYYFHFWSQPYRIDTKKLSNYSFYFLGYFSSVQMNSSMVRNQMLENSFLMDTLTKKLDTRIPIIPLIRSLSKAQFCTVSGYPISKPIWTDLADCDIINRFGRICRKLSHYHSGSSKKQSLYRMKYILRLSCARTLARKHKSSARSFLQRLSSGLLEEFFTEEEQVISLIFPKRTSFYLYGSYRERIWYLDIIRINDLVNSLLVTT.

Belongs to the intron maturase 2 family. MatK subfamily.

Its subcellular location is the plastid. It is found in the chloroplast. Functionally, usually encoded in the trnK tRNA gene intron. Probably assists in splicing its own and other chloroplast group II introns. This chain is Maturase K, found in Alpinia calcarata (Snap ginger).